A 151-amino-acid polypeptide reads, in one-letter code: Acidic phospholipase A2 1 (151 aa).

Positions 1-27 (MYPAHLLVLLAVCVSLLGAASIPARPL) are cleaved as a signal peptide. 7 cysteine pairs are disulfide-bonded: C38/C104, C54/C151, C56/C72, C71/C132, C78/C125, C88/C118, and C111/C123. Residues Y55, G57, and G59 each contribute to the Ca(2+) site. H75 is an active-site residue. D76 is a binding site for Ca(2+). D126 is a catalytic residue.

It belongs to the phospholipase A2 family. Group I subfamily. D49 sub-subfamily. Ca(2+) is required as a cofactor. In terms of tissue distribution, expressed by the venom gland.

It is found in the secreted. The catalysed reaction is a 1,2-diacyl-sn-glycero-3-phosphocholine + H2O = a 1-acyl-sn-glycero-3-phosphocholine + a fatty acid + H(+). In terms of biological role, PLA2 catalyzes the calcium-dependent hydrolysis of the 2-acyl groups in 3-sn-phosphoglycerides. The polypeptide is Acidic phospholipase A2 1 (Tropidechis carinatus (Australian rough-scaled snake)).